We begin with the raw amino-acid sequence, 508 residues long: ATP synthase subunit alpha, mitochondrial (508 aa).

171–178 (GDRQTGKT) contributes to the ATP binding site.

It belongs to the ATPase alpha/beta chains family. In terms of assembly, F-type ATPases have 2 components, CF(1) - the catalytic core - and CF(0) - the membrane proton channel. CF(1) has five subunits: alpha(3), beta(3), gamma(1), delta(1), epsilon(1). CF(0) has three main subunits: a, b and c.

The protein resides in the mitochondrion. The protein localises to the mitochondrion inner membrane. In terms of biological role, mitochondrial membrane ATP synthase (F(1)F(0) ATP synthase or Complex V) produces ATP from ADP in the presence of a proton gradient across the membrane which is generated by electron transport complexes of the respiratory chain. F-type ATPases consist of two structural domains, F(1) - containing the extramembraneous catalytic core, and F(0) - containing the membrane proton channel, linked together by a central stalk and a peripheral stalk. During catalysis, ATP synthesis in the catalytic domain of F(1) is coupled via a rotary mechanism of the central stalk subunits to proton translocation. Subunits alpha and beta form the catalytic core in F(1). Rotation of the central stalk against the surrounding alpha(3)beta(3) subunits leads to hydrolysis of ATP in three separate catalytic sites on the beta subunits. Subunit alpha does not bear the catalytic high-affinity ATP-binding sites. The protein is ATP synthase subunit alpha, mitochondrial (ATPA) of Phaseolus vulgaris (Kidney bean).